The sequence spans 147 residues: Deoxyuridine 5'-triphosphate nucleotidohydrolase (147 aa).

A Mg(2+)-binding site is contributed by arginine 24. DUTP is bound by residues 68 to 70, 82 to 85, tyrosine 88, glycine 93, isoleucine 95, and arginine 111; these read PRS and GVID.

This sequence belongs to the dUTPase family. Mg(2+) serves as cofactor.

It carries out the reaction dUTP + H2O = dUMP + diphosphate + H(+). Its function is as follows. This enzyme is involved in nucleotide metabolism: it produces dUMP, the immediate precursor of thymidine nucleotides and it decreases the intracellular concentration of dUTP so that uracil cannot be incorporated into DNA. This chain is Deoxyuridine 5'-triphosphate nucleotidohydrolase (OPG046), found in Bos taurus (Bovine).